A 320-amino-acid chain; its full sequence is Aspartate carbamoyltransferase catalytic subunit (320 aa).

Carbamoyl phosphate contacts are provided by Arg70 and Thr71. An L-aspartate-binding site is contributed by Lys98. Carbamoyl phosphate-binding residues include Arg120, His149, and Gln152. L-aspartate is bound by residues Arg182 and Arg237. 2 residues coordinate carbamoyl phosphate: Gly278 and Pro279.

Belongs to the aspartate/ornithine carbamoyltransferase superfamily. ATCase family. In terms of assembly, heterododecamer (2C3:3R2) of six catalytic PyrB chains organized as two trimers (C3), and six regulatory PyrI chains organized as three dimers (R2).

The catalysed reaction is carbamoyl phosphate + L-aspartate = N-carbamoyl-L-aspartate + phosphate + H(+). Its pathway is pyrimidine metabolism; UMP biosynthesis via de novo pathway; (S)-dihydroorotate from bicarbonate: step 2/3. In terms of biological role, catalyzes the condensation of carbamoyl phosphate and aspartate to form carbamoyl aspartate and inorganic phosphate, the committed step in the de novo pyrimidine nucleotide biosynthesis pathway. In Ruthia magnifica subsp. Calyptogena magnifica, this protein is Aspartate carbamoyltransferase catalytic subunit.